A 457-amino-acid chain; its full sequence is Aromatic amino acid permease FywP (457 aa).

12 consecutive transmembrane segments (helical) span residues 16 to 36 (IVML…SGKV), 43 to 63 (SVLL…YGVG), 91 to 111 (FADW…EAGV), 114 to 134 (FLAI…VAVL), 154 to 174 (AFIK…LLVI), 205 to 225 (GFLT…LAAI), 243 to 263 (GVLI…LHLL), 292 to 312 (IVLV…IYAT), 342 to 362 (NAIL…AVLG), 373 to 393 (ISFT…VLYF), 403 to 423 (VKLA…MQII), and 424 to 444 (TNPW…YFSY).

This sequence belongs to the amino acid-polyamine-organocation (APC) superfamily. Amino acid transporter (AAT) (TC 2.A.3.1) family.

Its subcellular location is the cell membrane. Functionally, involved in phenylalanine and tyrosine uptake. Also has affinity for tryptophan. Plays no significant role in the excretion of accumulated phenylalanine. The protein is Aromatic amino acid permease FywP of Lactococcus lactis subsp. cremoris (strain MG1363).